A 300-amino-acid polypeptide reads, in one-letter code: MLLGSHVSMKGKEMLLGSAQQAAEFGANTFMIYTGAPQNTRRKPIEELNIPAAQALIAAKNLGPIVVHAPYIVNLGNTVKPENFKFAIEFLQQEVIRAEALGASQIVLHPGAHVGAGADAGIKQIIKGLNEILRPDQTAQIALETMAGKGTEVGRRFEEIAQMIDGVTLNDKLSVTFDTCHTSDAGYNIREDFDGVLNEFDHIIGLDRLKVIHLNDSKNPQGAHKDRHANIGFGEIGFDALHGVVTHPQLVDVPKIMETPYVGKDKKHNFAPYAYEIAMLKKGEFDPDLLTKIEQNEGRL.

Zn(2+) contacts are provided by H68, H109, E144, D178, H181, H213, D226, H228, and E258.

It belongs to the AP endonuclease 2 family. Zn(2+) serves as cofactor.

The enzyme catalyses Endonucleolytic cleavage to 5'-phosphooligonucleotide end-products.. Its function is as follows. Endonuclease IV plays a role in DNA repair. It cleaves phosphodiester bonds at apurinic or apyrimidinic (AP) sites, generating a 3'-hydroxyl group and a 5'-terminal sugar phosphate. The protein is Probable endonuclease 4 of Latilactobacillus sakei subsp. sakei (strain 23K) (Lactobacillus sakei subsp. sakei).